Reading from the N-terminus, the 351-residue chain is UDP-3-O-acylglucosamine N-acyltransferase (351 aa).

Histidine 240 serves as the catalytic Proton acceptor.

Belongs to the transferase hexapeptide repeat family. LpxD subfamily. Homotrimer.

It catalyses the reaction a UDP-3-O-[(3R)-3-hydroxyacyl]-alpha-D-glucosamine + a (3R)-hydroxyacyl-[ACP] = a UDP-2-N,3-O-bis[(3R)-3-hydroxyacyl]-alpha-D-glucosamine + holo-[ACP] + H(+). Its pathway is bacterial outer membrane biogenesis; LPS lipid A biosynthesis. Catalyzes the N-acylation of UDP-3-O-acylglucosamine using 3-hydroxyacyl-ACP as the acyl donor. Is involved in the biosynthesis of lipid A, a phosphorylated glycolipid that anchors the lipopolysaccharide to the outer membrane of the cell. This Pseudomonas fluorescens (strain ATCC BAA-477 / NRRL B-23932 / Pf-5) protein is UDP-3-O-acylglucosamine N-acyltransferase.